The following is a 221-amino-acid chain: Ribosomal RNA large subunit methyltransferase E (221 aa).

5 residues coordinate S-adenosyl-L-methionine: Gly-60, Trp-62, Asp-89, Asp-105, and Asp-134. Lys-174 (proton acceptor) is an active-site residue.

The protein belongs to the class I-like SAM-binding methyltransferase superfamily. RNA methyltransferase RlmE family.

The protein localises to the cytoplasm. The enzyme catalyses uridine(2552) in 23S rRNA + S-adenosyl-L-methionine = 2'-O-methyluridine(2552) in 23S rRNA + S-adenosyl-L-homocysteine + H(+). Its function is as follows. Specifically methylates the uridine in position 2552 of 23S rRNA at the 2'-O position of the ribose in the fully assembled 50S ribosomal subunit. This is Ribosomal RNA large subunit methyltransferase E from Cupriavidus taiwanensis (strain DSM 17343 / BCRC 17206 / CCUG 44338 / CIP 107171 / LMG 19424 / R1) (Ralstonia taiwanensis (strain LMG 19424)).